A 148-amino-acid polypeptide reads, in one-letter code: Arginine repressor (148 aa).

This sequence belongs to the ArgR family.

It localises to the cytoplasm. It functions in the pathway amino-acid biosynthesis; L-arginine biosynthesis [regulation]. Its function is as follows. Regulates arginine biosynthesis genes. The protein is Arginine repressor of Koribacter versatilis (strain Ellin345).